Here is a 103-residue protein sequence, read N- to C-terminus: Omega toxin Ap5 (103 aa).

An N-terminal signal peptide occupies residues Met-1 to Ala-22. A propeptide spanning residues Asp-23–Arg-57 is cleaved from the precursor. 3 disulfides stabilise this stretch: Cys-58-Cys-73, Cys-65-Cys-78, and Cys-72-Cys-93.

This sequence belongs to the neurotoxin 14 (magi-1) family. 08 (Ltx-4) subfamily. Expressed by the venom duct.

Its subcellular location is the secreted. Functionally, shows a weak inhibition on the voltage-gated calcium channel Cav2.1/CACNA1A and some voltage-gated sodium channels (with 1 uM toxin tested: 22.08% inhibition on Cav2.1/CACNA1A, 6.6% on Nav1.1/SCN1A, 4.2% on Nav1.5, and 16% on Nav1.7). Shows a weak inhibition on the voltage-gated calcium channel Cav2.1/CACNA1A (28.06% at 1 uM). The polypeptide is Omega toxin Ap5 (Acanthoscurria paulensis (Brazilian giant black tarantula spider)).